The primary structure comprises 464 residues: Asparagine--tRNA ligase (464 aa).

The protein belongs to the class-II aminoacyl-tRNA synthetase family. In terms of assembly, homodimer.

Its subcellular location is the cytoplasm. It carries out the reaction tRNA(Asn) + L-asparagine + ATP = L-asparaginyl-tRNA(Asn) + AMP + diphosphate + H(+). The protein is Asparagine--tRNA ligase of Acetivibrio thermocellus (strain ATCC 27405 / DSM 1237 / JCM 9322 / NBRC 103400 / NCIMB 10682 / NRRL B-4536 / VPI 7372) (Clostridium thermocellum).